Consider the following 503-residue polypeptide: ATP-dependent RNA helicase dbp3 (503 aa).

The segment covering 1-13 (MGKRVSHNEGADR) has biased composition (basic and acidic residues). Positions 1 to 37 (MGKRVSHNEGADRRPKKKAKNEKPEKETMESPAADVT) are disordered. A Q motif motif is present at residues 104 to 112 (SFASPTPIQ). One can recognise a Helicase ATP-binding domain in the interval 116 to 292 (WPLLFAGRDV…ATFMTSAVTV (177 aa)). Residue 129–136 (AETGSGKT) participates in ATP binding. Positions 239–242 (DEAD) match the DEAD box motif. The Helicase C-terminal domain maps to 323-472 (RLVQLLSENQ…EVPQELLKFG (150 aa)).

This sequence belongs to the DEAD box helicase family. DDX5/DBP2 subfamily.

The protein resides in the nucleus. Its subcellular location is the nucleolus. It catalyses the reaction ATP + H2O = ADP + phosphate + H(+). ATP-dependent RNA helicase required for 60S ribosomal subunit synthesis. Involved in efficient pre-rRNA processing, predominantly at site A3, which is necessary for the normal formation of 25S and 5.8S rRNAs. This Aspergillus clavatus (strain ATCC 1007 / CBS 513.65 / DSM 816 / NCTC 3887 / NRRL 1 / QM 1276 / 107) protein is ATP-dependent RNA helicase dbp3 (dbp3).